Reading from the N-terminus, the 217-residue chain is Large ribosomal subunit protein uL1 (217 aa).

Ser2 carries the N-acetylserine modification. Tyr11 carries the post-translational modification Phosphotyrosine. 2 positions are modified to N6-acetyllysine: Lys91 and Lys106. At Lys118 the chain carries N6-acetyllysine; alternate. Residue Lys118 forms a Glycyl lysine isopeptide (Lys-Gly) (interchain with G-Cter in SUMO1); alternate linkage. Lys118 participates in a covalent cross-link: Glycyl lysine isopeptide (Lys-Gly) (interchain with G-Cter in SUMO2); alternate. Lys161 is covalently cross-linked (Glycyl lysine isopeptide (Lys-Gly) (interchain with G-Cter in SUMO2)).

This sequence belongs to the universal ribosomal protein uL1 family. Component of the large ribosomal subunit.

Its subcellular location is the cytoplasm. Its function is as follows. Component of the large ribosomal subunit. The ribosome is a large ribonucleoprotein complex responsible for the synthesis of proteins in the cell. In Mus musculus (Mouse), this protein is Large ribosomal subunit protein uL1 (Rpl10a).